We begin with the raw amino-acid sequence, 82 residues long: ATP synthase subunit c, chloroplastic (82 aa).

2 helical membrane-spanning segments follow: residues proline 3–glycine 23 and phenylalanine 57–alanine 77.

It belongs to the ATPase C chain family. As to quaternary structure, F-type ATPases have 2 components, F(1) - the catalytic core - and F(0) - the membrane proton channel. F(1) has five subunits: alpha(3), beta(3), gamma(1), delta(1), epsilon(1). F(0) has four main subunits: a(1), b(1), b'(1) and c(10-14). The alpha and beta chains form an alternating ring which encloses part of the gamma chain. F(1) is attached to F(0) by a central stalk formed by the gamma and epsilon chains, while a peripheral stalk is formed by the delta, b and b' chains.

The protein localises to the plastid. It localises to the chloroplast thylakoid membrane. In terms of biological role, f(1)F(0) ATP synthase produces ATP from ADP in the presence of a proton or sodium gradient. F-type ATPases consist of two structural domains, F(1) containing the extramembraneous catalytic core and F(0) containing the membrane proton channel, linked together by a central stalk and a peripheral stalk. During catalysis, ATP synthesis in the catalytic domain of F(1) is coupled via a rotary mechanism of the central stalk subunits to proton translocation. Key component of the F(0) channel; it plays a direct role in translocation across the membrane. A homomeric c-ring of between 10-14 subunits forms the central stalk rotor element with the F(1) delta and epsilon subunits. This chain is ATP synthase subunit c, chloroplastic, found in Chlorella vulgaris (Green alga).